The primary structure comprises 248 residues: NAD-dependent protein deacylase 2 (248 aa).

Residues 1–248 enclose the Deacetylase sirtuin-type domain; sequence MLQAASALRH…HVMAELISHI (248 aa). Residues 19–38 and 102–105 contribute to the NAD(+) site; these read GAGL…GGLY and QNVD. Histidine 122 serves as the catalytic Proton acceptor. Residues cysteine 130, cysteine 133, cysteine 152, and cysteine 155 each contribute to the Zn(2+) site. NAD(+) contacts are provided by residues 193–195, 219–221, and alanine 237; these read GTT and NPQ.

It belongs to the sirtuin family. Class III subfamily. Zn(2+) serves as cofactor.

It localises to the cytoplasm. It carries out the reaction N(6)-acetyl-L-lysyl-[protein] + NAD(+) + H2O = 2''-O-acetyl-ADP-D-ribose + nicotinamide + L-lysyl-[protein]. In terms of biological role, NAD-dependent protein deacetylase which modulates the activities of several proteins which are inactive in their acetylated form. This chain is NAD-dependent protein deacylase 2 (cobB2), found in Pseudomonas syringae pv. tomato (strain ATCC BAA-871 / DC3000).